A 510-amino-acid polypeptide reads, in one-letter code: GTPase Der (510 aa).

EngA-type G domains are found at residues 3-166 (PVVA…ATAL) and 220-393 (IKIA…ACAT). GTP is bound by residues 9–16 (GRPNVGKS), 56–60 (DTGGI), 118–121 (NKTD), 226–233 (GRPNVGKS), 273–277 (DTAGV), and 338–341 (NKWD). The region spanning 394–478 (QKTSTSMLTR…PIRIQFQEGN (85 aa)) is the KH-like domain.

The protein belongs to the TRAFAC class TrmE-Era-EngA-EngB-Septin-like GTPase superfamily. EngA (Der) GTPase family. In terms of assembly, associates with the 50S ribosomal subunit.

Functionally, GTPase that plays an essential role in the late steps of ribosome biogenesis. The chain is GTPase Der from Haemophilus ducreyi (strain 35000HP / ATCC 700724).